Here is a 199-residue protein sequence, read N- to C-terminus: NAD(P)H dehydrogenase (quinone) (199 aa).

The Flavodoxin-like domain maps to 4–190 (VLVLYYSAYG…AGARYQGRQI (187 aa)). FMN contacts are provided by residues 10-15 (SAYGHI) and 78-80 (TRF). Tyrosine 12 is an NAD(+) binding site. Tryptophan 98 is a substrate binding site. Residues 113-119 (SSATQHG) and histidine 134 each bind FMN.

The protein belongs to the WrbA family. Requires FMN as cofactor.

The catalysed reaction is a quinone + NADH + H(+) = a quinol + NAD(+). It catalyses the reaction a quinone + NADPH + H(+) = a quinol + NADP(+). This Bradyrhizobium diazoefficiens (strain JCM 10833 / BCRC 13528 / IAM 13628 / NBRC 14792 / USDA 110) protein is NAD(P)H dehydrogenase (quinone).